We begin with the raw amino-acid sequence, 87 residues long: DNA-directed RNA polymerase subunit Rpo5 (87 aa).

Belongs to the archaeal Rpo5/eukaryotic RPB5 RNA polymerase subunit family. In terms of assembly, part of the RNA polymerase complex.

The protein localises to the cytoplasm. The catalysed reaction is RNA(n) + a ribonucleoside 5'-triphosphate = RNA(n+1) + diphosphate. Functionally, DNA-dependent RNA polymerase (RNAP) catalyzes the transcription of DNA into RNA using the four ribonucleoside triphosphates as substrates. In Thermoplasma acidophilum (strain ATCC 25905 / DSM 1728 / JCM 9062 / NBRC 15155 / AMRC-C165), this protein is DNA-directed RNA polymerase subunit Rpo5.